A 249-amino-acid polypeptide reads, in one-letter code: 4-hydroxy-tetrahydrodipicolinate reductase (249 aa).

Residues 8–13 (GVTGQM), 87–89 (GTT), and 111–114 (ATNF) each bind NAD(+). Catalysis depends on His-143, which acts as the Proton donor/acceptor. Residue His-144 participates in (S)-2,3,4,5-tetrahydrodipicolinate binding. Catalysis depends on Lys-147, which acts as the Proton donor. 153–154 (GT) is a (S)-2,3,4,5-tetrahydrodipicolinate binding site.

The protein belongs to the DapB family.

It localises to the cytoplasm. The catalysed reaction is (S)-2,3,4,5-tetrahydrodipicolinate + NAD(+) + H2O = (2S,4S)-4-hydroxy-2,3,4,5-tetrahydrodipicolinate + NADH + H(+). The enzyme catalyses (S)-2,3,4,5-tetrahydrodipicolinate + NADP(+) + H2O = (2S,4S)-4-hydroxy-2,3,4,5-tetrahydrodipicolinate + NADPH + H(+). It participates in amino-acid biosynthesis; L-lysine biosynthesis via DAP pathway; (S)-tetrahydrodipicolinate from L-aspartate: step 4/4. In terms of biological role, catalyzes the conversion of 4-hydroxy-tetrahydrodipicolinate (HTPA) to tetrahydrodipicolinate. The sequence is that of 4-hydroxy-tetrahydrodipicolinate reductase from Haloarcula marismortui (strain ATCC 43049 / DSM 3752 / JCM 8966 / VKM B-1809) (Halobacterium marismortui).